A 526-amino-acid polypeptide reads, in one-letter code: ATP synthase subunit alpha (526 aa).

171-178 (GDRQTGKT) contributes to the ATP binding site.

Belongs to the ATPase alpha/beta chains family. F-type ATPases have 2 components, CF(1) - the catalytic core - and CF(0) - the membrane proton channel. CF(1) has five subunits: alpha(3), beta(3), gamma(1), delta(1), epsilon(1). CF(0) has three main subunits: a(1), b(2) and c(9-12). The alpha and beta chains form an alternating ring which encloses part of the gamma chain. CF(1) is attached to CF(0) by a central stalk formed by the gamma and epsilon chains, while a peripheral stalk is formed by the delta and b chains.

Its subcellular location is the cell inner membrane. It carries out the reaction ATP + H2O + 4 H(+)(in) = ADP + phosphate + 5 H(+)(out). In terms of biological role, produces ATP from ADP in the presence of a proton gradient across the membrane. The alpha chain is a regulatory subunit. This is ATP synthase subunit alpha from Cytophaga hutchinsonii (strain ATCC 33406 / DSM 1761 / CIP 103989 / NBRC 15051 / NCIMB 9469 / D465).